The chain runs to 61 residues: Large ribosomal subunit protein uL30 (61 aa).

It belongs to the universal ribosomal protein uL30 family. Part of the 50S ribosomal subunit.

The sequence is that of Large ribosomal subunit protein uL30 from Thermobifida fusca (strain YX).